Consider the following 428-residue polypeptide: Histidine--tRNA ligase (428 aa).

Belongs to the class-II aminoacyl-tRNA synthetase family. Homodimer.

It is found in the cytoplasm. It catalyses the reaction tRNA(His) + L-histidine + ATP = L-histidyl-tRNA(His) + AMP + diphosphate + H(+). The protein is Histidine--tRNA ligase of Bordetella bronchiseptica (strain ATCC BAA-588 / NCTC 13252 / RB50) (Alcaligenes bronchisepticus).